The chain runs to 270 residues: NADPH-dependent 7-cyano-7-deazaguanine reductase (270 aa).

79 to 81 (IES) is a binding site for substrate. 81–82 (SK) provides a ligand contact to NADPH. The Thioimide intermediate role is filled by cysteine 177. The active-site Proton donor is aspartate 184. 216–217 (HE) lines the substrate pocket. Residue 245–246 (RG) participates in NADPH binding.

Belongs to the GTP cyclohydrolase I family. QueF type 2 subfamily. Homodimer.

It is found in the cytoplasm. The enzyme catalyses 7-aminomethyl-7-carbaguanine + 2 NADP(+) = 7-cyano-7-deazaguanine + 2 NADPH + 3 H(+). The protein operates within tRNA modification; tRNA-queuosine biosynthesis. Functionally, catalyzes the NADPH-dependent reduction of 7-cyano-7-deazaguanine (preQ0) to 7-aminomethyl-7-deazaguanine (preQ1). This chain is NADPH-dependent 7-cyano-7-deazaguanine reductase, found in Acinetobacter baumannii (strain SDF).